The sequence spans 463 residues: GTPase Der (463 aa).

A disordered region spans residues 1–20; sequence MDEGDEDLISGRGFTEGARK. 2 EngA-type G domains span residues 27 to 190 and 202 to 375; these read GVLA…KQAE and RRVA…ESWD. Residues 33 to 40, 80 to 84, 142 to 145, 208 to 215, 255 to 259, and 320 to 323 contribute to the GTP site; these read GRPNVGKS, DTGGW, NKID, DTAGI, and NKWD. Positions 376–458 constitute a KH-like domain; sequence QRIPTGKLNA…PIQISVNIRE (83 aa).

It belongs to the TRAFAC class TrmE-Era-EngA-EngB-Septin-like GTPase superfamily. EngA (Der) GTPase family. Associates with the 50S ribosomal subunit.

Its function is as follows. GTPase that plays an essential role in the late steps of ribosome biogenesis. This is GTPase Der from Bifidobacterium longum (strain NCC 2705).